The sequence spans 142 residues: Putative pre-16S rRNA nuclease (142 aa).

This sequence belongs to the YqgF nuclease family.

It is found in the cytoplasm. In terms of biological role, could be a nuclease involved in processing of the 5'-end of pre-16S rRNA. The protein is Putative pre-16S rRNA nuclease of Nitratidesulfovibrio vulgaris (strain DSM 19637 / Miyazaki F) (Desulfovibrio vulgaris).